The following is a 777-amino-acid chain: 1,4-alpha-glucan branching enzyme GlgB (777 aa).

Residue aspartate 408 is the Nucleophile of the active site. Glutamate 461 serves as the catalytic Proton donor.

The protein belongs to the glycosyl hydrolase 13 family. GlgB subfamily. In terms of assembly, monomer.

The enzyme catalyses Transfers a segment of a (1-&gt;4)-alpha-D-glucan chain to a primary hydroxy group in a similar glucan chain.. The protein operates within glycan biosynthesis; glycogen biosynthesis. In terms of biological role, catalyzes the formation of the alpha-1,6-glucosidic linkages in glycogen by scission of a 1,4-alpha-linked oligosaccharide from growing alpha-1,4-glucan chains and the subsequent attachment of the oligosaccharide to the alpha-1,6 position. In Actinobacillus pleuropneumoniae serotype 3 (strain JL03), this protein is 1,4-alpha-glucan branching enzyme GlgB.